We begin with the raw amino-acid sequence, 495 residues long: Nuclear receptor subfamily 6 group A member 1 (495 aa).

The tract at residues 1–34 is disordered; sequence MERDERPPSGGGGGGGSAGFLEPPAALPPPPRNG. Residues 9–18 show a composition bias toward gly residues; it reads SGGGGGGGSA. The nuclear receptor DNA-binding region spans 72–147; that stretch reads QRTCLICGDR…MGMNRKAIRE (76 aa). 8 residues coordinate Zn(2+): cysteine 75, cysteine 78, cysteine 92, cysteine 95, cysteine 111, cysteine 117, cysteine 127, and cysteine 130. 2 consecutive NR C4-type zinc fingers follow at residues 75–95 and 111–135; these read CLIC…CEGC and CSRD…LLKC. Disordered stretches follow at residues 145 to 165 and 177 to 214; these read IRED…QISE and FEEE…LSSS. The segment covering 180–192 has biased composition (basic and acidic residues); the sequence is EANHWSNHGDSDH. The sufficient for interaction with UIMC1 stretch occupies residues 187–268; it reads HGDSDHSSPG…RSLDPQSYSL (82 aa). Residues 202–214 are compositionally biased toward low complexity; that stretch reads SNQPSPGSTLSSS. An NR LBD domain is found at 264 to 495; that stretch reads QSYSLIHQLM…HSCKTSTVKE (232 aa).

Belongs to the nuclear hormone receptor family. NR6 subfamily. In terms of assembly, homodimer. Interacts with UIMC1. Expressed in the germ cells of both the adult testis and ovary, being most abundant in spermatids.

It localises to the nucleus. In terms of biological role, orphan nuclear receptor that binds to a response element containing the sequence 5'-TCAAGGTCA-3'. Acts as a regulator of embryonic stem cell pluripotency by mediating repression of POU5F1/OCT4: binds to the DR0 element within the POU5F1/OCT4 promoter and inhibits POU5F1/OCT4 expression during embryonic stem cell differentiation. Required to restrict POU5F1/OCT4 expression to the germ cell lineage. Involved in the regulation of gene expression in germ cell development during gametogenesis. The sequence is that of Nuclear receptor subfamily 6 group A member 1 (Nr6a1) from Mus musculus (Mouse).